The sequence spans 381 residues: S-adenosylmethionine synthase (381 aa).

Residue H15 participates in ATP binding. D17 is a binding site for Mg(2+). Residue E43 participates in K(+) binding. Positions 56 and 99 each coordinate L-methionine. A flexible loop region spans residues 99–109 (QSPDINQGVDR). ATP-binding positions include 164–166 (DAK), 230–231 (RF), D239, 245–246 (RK), A262, and K266. Position 239 (D239) interacts with L-methionine. K270 contacts L-methionine.

Belongs to the AdoMet synthase family. Homotetramer; dimer of dimers. Requires Mg(2+) as cofactor. K(+) is required as a cofactor.

It is found in the cytoplasm. It carries out the reaction L-methionine + ATP + H2O = S-adenosyl-L-methionine + phosphate + diphosphate. Its pathway is amino-acid biosynthesis; S-adenosyl-L-methionine biosynthesis; S-adenosyl-L-methionine from L-methionine: step 1/1. Its function is as follows. Catalyzes the formation of S-adenosylmethionine (AdoMet) from methionine and ATP. The overall synthetic reaction is composed of two sequential steps, AdoMet formation and the subsequent tripolyphosphate hydrolysis which occurs prior to release of AdoMet from the enzyme. The sequence is that of S-adenosylmethionine synthase from Alteromonas mediterranea (strain DSM 17117 / CIP 110805 / LMG 28347 / Deep ecotype).